We begin with the raw amino-acid sequence, 232 residues long: Large ribosomal subunit protein uL1 (232 aa).

The protein belongs to the universal ribosomal protein uL1 family. As to quaternary structure, part of the 50S ribosomal subunit.

Its function is as follows. Binds directly to 23S rRNA. The L1 stalk is quite mobile in the ribosome, and is involved in E site tRNA release. In terms of biological role, protein L1 is also a translational repressor protein, it controls the translation of the L11 operon by binding to its mRNA. The chain is Large ribosomal subunit protein uL1 from Variovorax paradoxus (strain S110).